Consider the following 142-residue polypeptide: Large ribosomal subunit protein uL16 (142 aa).

This sequence belongs to the universal ribosomal protein uL16 family. In terms of assembly, part of the 50S ribosomal subunit.

Binds 23S rRNA and is also seen to make contacts with the A and possibly P site tRNAs. This chain is Large ribosomal subunit protein uL16, found in Thermosipho melanesiensis (strain DSM 12029 / CIP 104789 / BI429).